A 218-amino-acid chain; its full sequence is Probable transaldolase (218 aa).

Lysine 83 acts as the Schiff-base intermediate with substrate in catalysis.

It belongs to the transaldolase family. Type 3B subfamily.

It is found in the cytoplasm. It carries out the reaction D-sedoheptulose 7-phosphate + D-glyceraldehyde 3-phosphate = D-erythrose 4-phosphate + beta-D-fructose 6-phosphate. Its pathway is carbohydrate degradation; pentose phosphate pathway; D-glyceraldehyde 3-phosphate and beta-D-fructose 6-phosphate from D-ribose 5-phosphate and D-xylulose 5-phosphate (non-oxidative stage): step 2/3. In terms of biological role, transaldolase is important for the balance of metabolites in the pentose-phosphate pathway. The sequence is that of Probable transaldolase from Thermotoga petrophila (strain ATCC BAA-488 / DSM 13995 / JCM 10881 / RKU-1).